We begin with the raw amino-acid sequence, 291 residues long: Proteasome subunit beta (291 aa).

The propeptide at 1-57 (MTWPLPDRLSINSLSGTPAVDLSSFTDFLRRQAPELLPASISGGAPLAGGDAQLPHG) is removed in mature form; by autocatalysis. The active-site Nucleophile is the threonine 58.

The protein belongs to the peptidase T1B family. The 20S proteasome core is composed of 14 alpha and 14 beta subunits that assemble into four stacked heptameric rings, resulting in a barrel-shaped structure. The two inner rings, each composed of seven catalytic beta subunits, are sandwiched by two outer rings, each composed of seven alpha subunits. The catalytic chamber with the active sites is on the inside of the barrel. Has a gated structure, the ends of the cylinder being occluded by the N-termini of the alpha-subunits. Is capped by the proteasome-associated ATPase, ARC.

It localises to the cytoplasm. It carries out the reaction Cleavage of peptide bonds with very broad specificity.. The protein operates within protein degradation; proteasomal Pup-dependent pathway. Its activity is regulated as follows. The formation of the proteasomal ATPase ARC-20S proteasome complex, likely via the docking of the C-termini of ARC into the intersubunit pockets in the alpha-rings, may trigger opening of the gate for substrate entry. Interconversion between the open-gate and close-gate conformations leads to a dynamic regulation of the 20S proteasome proteolysis activity. Functionally, component of the proteasome core, a large protease complex with broad specificity involved in protein degradation. In Mycobacterium tuberculosis (strain ATCC 25177 / H37Ra), this protein is Proteasome subunit beta.